The primary structure comprises 309 residues: Metaxin-3 (309 aa).

The segment at 274–309 (MDDNLRRSPQNRPQKLSTLKPVGGAENSHSSDLLSH) is disordered. 2 stretches are compositionally biased toward polar residues: residues 280–290 (RSPQNRPQKLS) and 300–309 (NSHSSDLLSH).

The protein belongs to the metaxin family. Part of a large protein complex spanning both mitochondrial membranes termed the mitochondrial intermembrane space bridging (MIB) complex.

It is found in the mitochondrion. It localises to the mitochondrion outer membrane. In terms of biological role, could function in transport of proteins into the mitochondrion. This chain is Metaxin-3 (mtx3), found in Xenopus laevis (African clawed frog).